The primary structure comprises 454 residues: Ribosomal protein uS12 methylthiotransferase RimO (454 aa).

Positions 14 to 125 (SKVAFSHVGC…IAKVLDRVEK (112 aa)) constitute an MTTase N-terminal domain. [4Fe-4S] cluster-binding residues include cysteine 23, cysteine 59, cysteine 88, cysteine 163, cysteine 167, and cysteine 170. Residues 149–378 (DKNKFVAYLR…ISVQQNISKD (230 aa)) form the Radical SAM core domain. The TRAM domain maps to 381-452 (QSYVGSKMKI…EYDLYGETIK (72 aa)).

This sequence belongs to the methylthiotransferase family. RimO subfamily. The cofactor is [4Fe-4S] cluster.

The protein localises to the cytoplasm. The enzyme catalyses L-aspartate(89)-[ribosomal protein uS12]-hydrogen + (sulfur carrier)-SH + AH2 + 2 S-adenosyl-L-methionine = 3-methylsulfanyl-L-aspartate(89)-[ribosomal protein uS12]-hydrogen + (sulfur carrier)-H + 5'-deoxyadenosine + L-methionine + A + S-adenosyl-L-homocysteine + 2 H(+). In terms of biological role, catalyzes the methylthiolation of an aspartic acid residue of ribosomal protein uS12. The polypeptide is Ribosomal protein uS12 methylthiotransferase RimO (Prochlorococcus marinus (strain MIT 9312)).